Reading from the N-terminus, the 297-residue chain is Protein AKTIP homolog (297 aa).

Residues Phe-13 to Glu-75 form a disordered region. Basic and acidic residues predominate over residues Leu-17–Ser-42. Residues Met-59–Glu-75 are compositionally biased toward polar residues. One can recognise a UBC core domain in the interval Phe-84–Asn-232.

This sequence belongs to the ubiquitin-conjugating enzyme family. FTS subfamily.

The chain is Protein AKTIP homolog from Nematostella vectensis (Starlet sea anemone).